The chain runs to 88 residues: Small ribosomal subunit protein bS20 (88 aa).

Belongs to the bacterial ribosomal protein bS20 family.

Functionally, binds directly to 16S ribosomal RNA. The chain is Small ribosomal subunit protein bS20 from Methylocella silvestris (strain DSM 15510 / CIP 108128 / LMG 27833 / NCIMB 13906 / BL2).